The primary structure comprises 3987 residues: Hybrid PKS-NRPS synthetase buaA (3987 aa).

Residues 5–438 form the Ketosynthase family 3 (KS3) domain; that stretch reads NEPIAIVGSG…GANAHAIVES (434 aa). Active-site for beta-ketoacyl synthase activity residues include C176, H315, and H358. The tract at residues 546–872 is malonyl-CoA:ACP transacylase (MAT) domain; that stretch reads VFTGQGAQWP…RNADDVESFS (327 aa). Positions 939 to 1072 are N-terminal hotdog fold; sequence HELLGVRVDS…GAVRLQLGAA (134 aa). The 302-residue stretch at 939 to 1240 folds into the PKS/mFAS DH domain; it reads HELLGVRVDS…VAPLVPVTQS (302 aa). Positions 940–1238 are dehydratase (DH) domain; the sequence is ELLGVRVDSL…LQVAPLVPVT (299 aa). The active-site Proton acceptor; for dehydratase activity is the H970. The tract at residues 1087–1240 is C-terminal hotdog fold; sequence MNDVNIEHFY…VAPLVPVTQS (154 aa). Residue D1147 is the Proton donor; for dehydratase activity of the active site. Residues 1399–1583 form a methyltransferase (MT) domain region; that stretch reads YLANLVKQLS…TSTPSHDVFM (185 aa). Positions 2113–2285 are ketoreductase (KR) domain; the sequence is TYLLVGLTGE…LPGSVMNLAG (173 aa). The Carrier 1 domain maps to 2397-2473; that stretch reads RVLTNGLILT…AMVEDTMERM (77 aa). Residue S2433 is modified to O-(pantetheine 4'-phosphoryl)serine. The tract at residues 2489 to 2561 is disordered; sequence AADRPSAPSD…PPPSSVMSED (73 aa). Basic and acidic residues predominate over residues 2514–2525; it reads HNSEEQESHAME. The span at 2532 to 2550 shows a compositional bias: low complexity; that stretch reads STTSGGECSSTKESSSSEA. Residues 2582-3001 are condensation (C) domain; sequence MGYGSLQFFF…QLVKMCAYME (420 aa). The tract at residues 3042-3448 is adenylation (A) (KR) domain; that stretch reads LDVAQARPEA…GQLYYEGRIA (407 aa). In terms of domain architecture, Carrier 2 spans 3564 to 3644; it reads ADLSETELAL…AMALKIRNSQ (81 aa). S3604 carries the O-(pantetheine 4'-phosphoryl)serine modification. The tract at residues 3680–3916 is reductase (R) domain; sequence TVVLTGATGY…TGIAAAAVGA (237 aa).

The protein in the C-terminal section; belongs to the NRP synthetase family.

Its pathway is mycotoxin biosynthesis. Its function is as follows. Hybrid PKS-NRPS synthetase; part of the gene cluster that mediates the biosynthesis of burnettramic acids, an unusual class of bolaamphiphilic pyrrolizidinediones that display potent antibacterial, antifungal, and cytotoxic activities. The first step of the biosynthesis of burnettramic acids is the hydroxylation of proline by the proline hydroxylase buaE to generate 4-hydroxyproline. The PKS-NRPS buaA and trans-enoyl reductase buaC construct the highly reduced polyketide chain, and the condensation (C) domain of buaA then catalyzes the amide bond formation with the activated 4-hydroxyproline. This is followed by the R domain releasing the nascent polyketide-peptide directly via a Dieckmann condensation to afford a tetramic acid fused to the hydroxyproline, generating the bicyclic pyrrolidinedione moiety. The cytochrome P450 monooxygenases buaD and buaG are likely responsible for the multiple hydroxylations on the polyketide chain and its terminus, although in a heterologous context, buaD does not appear to be required. Therefore, while buaG may be a multifunctional cytochrome P450 monooxygenase, it cannot be ruled out that the two secondary alcohols on the polyketide chain could have an acetate origin. Finally, the glycosyltransferase buaB transfers beta-D-mannose to the aglycone burnettramic acid A to form burnettramic acid A. Burnettramic acid B is a minor cis-pyrrolizidine epimer of burnettramic acid A and it is likely that small amounts of it form naturally in acidic environments. This Petromyces alliaceus (Aspergillus alliaceus) protein is Hybrid PKS-NRPS synthetase buaA.